A 482-amino-acid polypeptide reads, in one-letter code: Adenylosuccinate lyase (482 aa).

Residues 14–15, 82–84, and 108–109 contribute to the substrate site; these read RY, RHD, and TS. His156 acts as the Proton donor/acceptor in catalysis. Gln238 contacts substrate. Ser286 serves as the catalytic Proton donor/acceptor. Residues Arg300, Arg326, Ser331, and Arg335 each coordinate substrate.

The protein belongs to the lyase 1 family. Adenylosuccinate lyase subfamily. As to quaternary structure, homotetramer. Residues from neighboring subunits contribute catalytic and substrate-binding residues to each active site.

It catalyses the reaction N(6)-(1,2-dicarboxyethyl)-AMP = fumarate + AMP. The catalysed reaction is (2S)-2-[5-amino-1-(5-phospho-beta-D-ribosyl)imidazole-4-carboxamido]succinate = 5-amino-1-(5-phospho-beta-D-ribosyl)imidazole-4-carboxamide + fumarate. It functions in the pathway purine metabolism; AMP biosynthesis via de novo pathway; AMP from IMP: step 2/2. It participates in purine metabolism; IMP biosynthesis via de novo pathway; 5-amino-1-(5-phospho-D-ribosyl)imidazole-4-carboxamide from 5-amino-1-(5-phospho-D-ribosyl)imidazole-4-carboxylate: step 2/2. In Schizosaccharomyces pombe (strain 972 / ATCC 24843) (Fission yeast), this protein is Adenylosuccinate lyase (ade8).